The following is an 89-amino-acid chain: Small ribosomal subunit protein uS15 (89 aa).

The disordered stretch occupies residues 1–23 (MTLNTEAKQKIINKHQTHGTDTG).

Belongs to the universal ribosomal protein uS15 family. Part of the 30S ribosomal subunit. Forms a bridge to the 50S subunit in the 70S ribosome, contacting the 23S rRNA.

In terms of biological role, one of the primary rRNA binding proteins, it binds directly to 16S rRNA where it helps nucleate assembly of the platform of the 30S subunit by binding and bridging several RNA helices of the 16S rRNA. Functionally, forms an intersubunit bridge (bridge B4) with the 23S rRNA of the 50S subunit in the ribosome. This chain is Small ribosomal subunit protein uS15, found in Prochlorococcus marinus (strain SARG / CCMP1375 / SS120).